The sequence spans 445 residues: Lipoyl synthase, mitochondrial (445 aa).

A mitochondrion-targeting transit peptide spans 1-40; sequence MRPGSWRVITHYGFTGPIQRLQAPLRRSLARAAALSTRSY. A compositionally biased stretch (low complexity) spans 42–71; it reads TIPSAPSSQPTSQESSPAASASASASAPAT. The segment at 42 to 77 is disordered; the sequence is TIPSAPSSQPTSQESSPAASASASASAPATKPRPTY. [4Fe-4S] cluster is bound by residues C157, C162, C168, C188, C192, C195, and S405. Positions 171 to 394 constitute a Radical SAM core domain; it reads GSNKAAATAT…RQRALDMGFL (224 aa).

This sequence belongs to the radical SAM superfamily. Lipoyl synthase family. [4Fe-4S] cluster is required as a cofactor.

The protein resides in the mitochondrion. The enzyme catalyses [[Fe-S] cluster scaffold protein carrying a second [4Fe-4S](2+) cluster] + N(6)-octanoyl-L-lysyl-[protein] + 2 oxidized [2Fe-2S]-[ferredoxin] + 2 S-adenosyl-L-methionine + 4 H(+) = [[Fe-S] cluster scaffold protein] + N(6)-[(R)-dihydrolipoyl]-L-lysyl-[protein] + 4 Fe(3+) + 2 hydrogen sulfide + 2 5'-deoxyadenosine + 2 L-methionine + 2 reduced [2Fe-2S]-[ferredoxin]. The protein operates within protein modification; protein lipoylation via endogenous pathway; protein N(6)-(lipoyl)lysine from octanoyl-[acyl-carrier-protein]: step 2/2. Its function is as follows. Catalyzes the radical-mediated insertion of two sulfur atoms into the C-6 and C-8 positions of the octanoyl moiety bound to the lipoyl domains of lipoate-dependent enzymes, thereby converting the octanoylated domains into lipoylated derivatives. This chain is Lipoyl synthase, mitochondrial, found in Sordaria macrospora (strain ATCC MYA-333 / DSM 997 / K(L3346) / K-hell).